Consider the following 545-residue polypeptide: CTP synthase (545 aa).

Residues 1 to 265 form an amidoligase domain region; it reads MNGIKHIFIT…DKFVIKHLDL (265 aa). Ser15 contacts CTP. A UTP-binding site is contributed by Ser15. Residues 16 to 21 and Asp73 each bind ATP; that span reads SIGKGL. The Mg(2+) site is built by Asp73 and Glu141. Residues 148–150, 188–193, and Lys224 each bind CTP; these read DIE and KTKPTQ. UTP contacts are provided by residues 188–193 and Lys224; that span reads KTKPTQ. Residues 290-534 form the Glutamine amidotransferase type-1 domain; that stretch reads EIAIIGKYTG…VAAALARKEI (245 aa). Gly349 provides a ligand contact to L-glutamine. Cys376 functions as the Nucleophile; for glutamine hydrolysis in the catalytic mechanism. L-glutamine is bound by residues 377-380, Glu400, and Arg460; that span reads LGMQ. Catalysis depends on residues His507 and Glu509.

The protein belongs to the CTP synthase family. In terms of assembly, homotetramer.

The enzyme catalyses UTP + L-glutamine + ATP + H2O = CTP + L-glutamate + ADP + phosphate + 2 H(+). It catalyses the reaction L-glutamine + H2O = L-glutamate + NH4(+). The catalysed reaction is UTP + NH4(+) + ATP = CTP + ADP + phosphate + 2 H(+). It functions in the pathway pyrimidine metabolism; CTP biosynthesis via de novo pathway; CTP from UDP: step 2/2. Allosterically activated by GTP, when glutamine is the substrate; GTP has no effect on the reaction when ammonia is the substrate. The allosteric effector GTP functions by stabilizing the protein conformation that binds the tetrahedral intermediate(s) formed during glutamine hydrolysis. Inhibited by the product CTP, via allosteric rather than competitive inhibition. Its function is as follows. Catalyzes the ATP-dependent amination of UTP to CTP with either L-glutamine or ammonia as the source of nitrogen. Regulates intracellular CTP levels through interactions with the four ribonucleotide triphosphates. In Tropheryma whipplei (strain TW08/27) (Whipple's bacillus), this protein is CTP synthase.